Reading from the N-terminus, the 418-residue chain is Gamma-glutamyl phosphate reductase (418 aa).

Belongs to the gamma-glutamyl phosphate reductase family.

It localises to the cytoplasm. The catalysed reaction is L-glutamate 5-semialdehyde + phosphate + NADP(+) = L-glutamyl 5-phosphate + NADPH + H(+). It participates in amino-acid biosynthesis; L-proline biosynthesis; L-glutamate 5-semialdehyde from L-glutamate: step 2/2. Its function is as follows. Catalyzes the NADPH-dependent reduction of L-glutamate 5-phosphate into L-glutamate 5-semialdehyde and phosphate. The product spontaneously undergoes cyclization to form 1-pyrroline-5-carboxylate. The polypeptide is Gamma-glutamyl phosphate reductase (Desulfatibacillum aliphaticivorans).